The primary structure comprises 371 residues: Partitioning defective 6 homolog beta (371 aa).

Residues S10 and S11 each carry the phosphoserine modification. Positions T16–K96 constitute a PB1 domain. The interaction with PARD3 and CDC42 stretch occupies residues R126 to N253. The Pseudo-CRIB domain maps to I133–I150. One can recognise a PDZ domain in the interval R157–N250. 2 disordered regions span residues N253–L273 and F326–L371. Positions F326 to S340 are enriched in polar residues. A compositionally biased stretch (basic and acidic residues) spans L352–E363.

It belongs to the PAR6 family. In terms of assembly, interacts with PARD3. Interacts with GTP-bound forms of CDC42, RHOQ/TC10 and RAC1. Interacts with the N-terminal part of PRKCI and PRKCZ. Part of a complex with PARD3, CDC42 or RAC1 and PRKCI or PRKCZ. Part of a complex with LLGL1 and PRKCI. Interacts with ALS2CR19. Interacts with ECT2. Interacts with PALS1. In terms of tissue distribution, expressed in pancreas and in both adult and fetal kidney. Weakly expressed in placenta and lung. Not expressed in other tissues.

The protein localises to the cytoplasm. It localises to the cell membrane. The protein resides in the cell junction. Its subcellular location is the tight junction. Adapter protein involved in asymmetrical cell division and cell polarization processes. Probably involved in formation of epithelial tight junctions. Association with PARD3 may prevent the interaction of PARD3 with F11R/JAM1, thereby preventing tight junction assembly. The PARD6-PARD3 complex links GTP-bound Rho small GTPases to atypical protein kinase C proteins. The chain is Partitioning defective 6 homolog beta (Pard6b) from Mus musculus (Mouse).